The primary structure comprises 403 residues: Histidine decarboxylase (403 aa).

Histidine 120 lines the substrate pocket. Lysine 233 bears the N6-(pyridoxal phosphate)lysine mark.

This sequence belongs to the group II decarboxylase family. Homotetramer. Requires pyridoxal 5'-phosphate as cofactor.

It catalyses the reaction L-histidine + H(+) = histamine + CO2. This is Histidine decarboxylase from Pseudomonas entomophila (strain L48).